Reading from the N-terminus, the 268-residue chain is Bis(5'-nucleosyl)-tetraphosphatase, symmetrical (268 aa).

Belongs to the Ap4A hydrolase family.

The enzyme catalyses P(1),P(4)-bis(5'-adenosyl) tetraphosphate + H2O = 2 ADP + 2 H(+). In terms of biological role, hydrolyzes diadenosine 5',5'''-P1,P4-tetraphosphate to yield ADP. The chain is Bis(5'-nucleosyl)-tetraphosphatase, symmetrical from Nitrosomonas europaea (strain ATCC 19718 / CIP 103999 / KCTC 2705 / NBRC 14298).